The sequence spans 248 residues: Prepilin leader peptidase/N-methyltransferase (248 aa).

A helical transmembrane segment spans residues 1–21 (MLSILFIFGLILGSFYYTAGC). Zn(2+)-binding residues include Cys36, Cys39, Cys61, and Cys64. A run of 6 helical transmembrane segments spans residues 68–88 (ISFMYPAAELVTACLFAAAGI), 90–110 (FGISLELFPAVVFISLLIIVA), 114–134 (IHFMLIPNRILIFFLPFLAAA), 143–163 (WYAGLLGAAAGFLFLAVIAAI), 178–198 (VIGFVLGVKMLAAAFFFSVLI), and 223–243 (AIAAGSILAYLYGDSIISFYI).

This sequence belongs to the peptidase A24 family. Zn(2+) is required as a cofactor.

The protein resides in the cell membrane. It catalyses the reaction Typically cleaves a -Gly-|-Phe- bond to release an N-terminal, basic peptide of 5-8 residues from type IV prepilin, and then N-methylates the new N-terminal amino group, the methyl donor being S-adenosyl-L-methionine.. In terms of biological role, plays a role in type II pseudopili formation by proteolytically removing the leader sequence from substrate proteins and subsequently monomethylating the alpha-amino group of the newly exposed N-terminal phenylalanine. Substrates include proteins required for biogenesis of the type II general secretory apparatus. The protein is Prepilin leader peptidase/N-methyltransferase (comC) of Bacillus subtilis (strain 168).